The primary structure comprises 345 residues: tRNA pseudouridine synthase B (345 aa).

The disordered stretch occupies residues Met1–Arg33. The span at Gln9–Ala20 shows a compositional bias: basic and acidic residues. The active-site Nucleophile is the Asp72.

This sequence belongs to the pseudouridine synthase TruB family. Type 1 subfamily.

It catalyses the reaction uridine(55) in tRNA = pseudouridine(55) in tRNA. Responsible for synthesis of pseudouridine from uracil-55 in the psi GC loop of transfer RNAs. This chain is tRNA pseudouridine synthase B, found in Bradyrhizobium diazoefficiens (strain JCM 10833 / BCRC 13528 / IAM 13628 / NBRC 14792 / USDA 110).